The following is a 179-amino-acid chain: Peptidyl-tRNA hydrolase (179 aa).

Tyrosine 15 lines the tRNA pocket. The active-site Proton acceptor is histidine 20. The tRNA site is built by tyrosine 66, asparagine 68, and asparagine 114.

The protein belongs to the PTH family. As to quaternary structure, monomer.

The protein resides in the cytoplasm. The catalysed reaction is an N-acyl-L-alpha-aminoacyl-tRNA + H2O = an N-acyl-L-amino acid + a tRNA + H(+). In terms of biological role, hydrolyzes ribosome-free peptidyl-tRNAs (with 1 or more amino acids incorporated), which drop off the ribosome during protein synthesis, or as a result of ribosome stalling. Catalyzes the release of premature peptidyl moieties from peptidyl-tRNA molecules trapped in stalled 50S ribosomal subunits, and thus maintains levels of free tRNAs and 50S ribosomes. The protein is Peptidyl-tRNA hydrolase of Chlamydia trachomatis serovar L2b (strain UCH-1/proctitis).